The following is a 466-amino-acid chain: Asparagine--tRNA ligase (466 aa).

This sequence belongs to the class-II aminoacyl-tRNA synthetase family. Homodimer.

The protein localises to the cytoplasm. The enzyme catalyses tRNA(Asn) + L-asparagine + ATP = L-asparaginyl-tRNA(Asn) + AMP + diphosphate + H(+). The sequence is that of Asparagine--tRNA ligase from Photobacterium profundum (strain SS9).